We begin with the raw amino-acid sequence, 561 residues long: Sesquiterpene synthase TPS2 (561 aa).

Residues 6–26 (ANGHSDVPSTQPPIGKQKKEI) form a disordered region. 5 residues coordinate (2E,6E)-farnesyl diphosphate: arginine 277, aspartate 314, aspartate 318, arginine 455, and aspartate 458. Mg(2+) is bound by residues aspartate 314 and aspartate 318. A DDXXD motif motif is present at residues 314–318 (DDTYD). Mg(2+) contacts are provided by aspartate 458, serine 462, and glutamate 466.

Belongs to the terpene synthase family. Tpsa subfamily. Monomer. Requires Mg(2+) as cofactor.

Its subcellular location is the cytoplasm. The enzyme catalyses (2E,6E)-farnesyl diphosphate = beta-ylangene + diphosphate. It carries out the reaction (2E,6E)-farnesyl diphosphate = beta-copaene + diphosphate. The catalysed reaction is (2E,6E)-farnesyl diphosphate = beta-cubebene + diphosphate. The protein operates within secondary metabolite biosynthesis; terpenoid biosynthesis. Its function is as follows. Sesquiterpene synthase involved in the biosynthesis of volatile organic compounds. Mediates the conversion of (2E,6E)-farnesyl diphosphate (FPP) into beta-ylangene, beta-copaene and beta-cubebene. Does not use (2E)-geranyl diphosphate (GPP) as substrate. This Cananga odorata (Ylang-ylang tree) protein is Sesquiterpene synthase TPS2.